Here is a 769-residue protein sequence, read N- to C-terminus: MPVLSHILGFPRIGLYRELKHALEQYWEKKITENKLLDIGRMLRMRHWKQQINSGINLIPIGDFSWYDHVLDMSIMLNNIPTRFHILSQKKNTLNMLFSIARGDSINNTTITPSEMKKWFNTNYHYIVPEFVQNQIFKLNCTQLLAEIDEALSLNHPIKPVLLGPLTYLWIGKTKETKEFDRLSLLPSLLLVYKEIFNILSKKNIQWIQIDEPALVLELPQTWLKAYLHAYDQLYQTKIKLLLTTYFGKIYHQLPIIKQLKVNGLHIDLTNCSDNDISLLHEQLPKKWILSAGIINGKNIWKTNLYDWFLKLNTITHQRSLWIGSSCSLLHSPIDLNIESKLNNNIKNWFAFAIQKCSEIKLLCDALNSNHNDNSDQQNILKKYYNTNIQRLNSNIINNPQVQERCKNIITLDHSRKTKHITRMKLQHNRFNLPLYPTTTIGSFPQTSEIRKLRLKFKNKQINEDYYYTHIQQYIKKIIQEQEKLDLDILVHGEPERNDMVEYFGENLKGFVSSQHGWIQSYGSRCIKPPIIIGDISRPIPITIPWINYAQSLTNKPVKGILTGPITIMTWSFAREDIPRHMIALQLALAIRDEVMDLEKSGIGVIQIDEPALREGLPLKKSEQSYYLKWAINTFKITVSSVKDNTQIHTHMCYSEFNEIIDDILKLDVDVISIESSRSDLQLLQFIKTAGKKLNEIGPGIYDIHSIHQPSINEIMDKLKKLLQYIPKDRLWINPDCGLKTRSWNEIRESLNNMVIAAKTLRINNGLNN.

5-methyltetrahydropteroyltri-L-glutamate contacts are provided by residues 17-20 (RELK) and lysine 118. L-homocysteine is bound by residues 441 to 443 (IGS) and glutamate 494. L-methionine contacts are provided by residues 441-443 (IGS) and glutamate 494. 5-methyltetrahydropteroyltri-L-glutamate is bound by residues 525–526 (RC) and tryptophan 571. Aspartate 609 provides a ligand contact to L-homocysteine. An L-methionine-binding site is contributed by aspartate 609. A 5-methyltetrahydropteroyltri-L-glutamate-binding site is contributed by glutamate 615. Residues histidine 651, cysteine 653, and glutamate 675 each contribute to the Zn(2+) site. The active-site Proton donor is histidine 705. Cysteine 737 serves as a coordination point for Zn(2+).

The protein belongs to the vitamin-B12 independent methionine synthase family. The cofactor is Zn(2+).

It catalyses the reaction 5-methyltetrahydropteroyltri-L-glutamate + L-homocysteine = tetrahydropteroyltri-L-glutamate + L-methionine. The protein operates within amino-acid biosynthesis; L-methionine biosynthesis via de novo pathway; L-methionine from L-homocysteine (MetE route): step 1/1. Functionally, catalyzes the transfer of a methyl group from 5-methyltetrahydrofolate to homocysteine resulting in methionine formation. The protein is 5-methyltetrahydropteroyltriglutamate--homocysteine methyltransferase of Blochmanniella floridana.